Consider the following 233-residue polypeptide: Antilisterial bacteriocin subtilosin biosynthesis protein AlbG (233 aa).

6 helical membrane passes run 7-27, 46-66, 116-136, 145-165, 176-198, and 203-220; these read FTLLLLLIGMAAYSFGWVQAV, GLLACTAALLMLPAFLYLHYV, TYVMAAVLCQVIIFGCMFEIV, TPPAFSMGLAMLLILYLLFCM, GSLFRKVFAGALAAAGIWWMLSF, and LLFLIILAAIQQIGSFIY.

The protein resides in the cell membrane. Involved in the production of the bacteriocin subtilosin. In Bacillus subtilis (strain 168), this protein is Antilisterial bacteriocin subtilosin biosynthesis protein AlbG (albG).